A 116-amino-acid chain; its full sequence is NADH-ubiquinone oxidoreductase chain 3 (116 aa).

A run of 3 helical transmembrane segments spans residues 3–23 (LIST…LVSF), 56–76 (FFLI…LLPL), and 87–107 (LTFM…IYEW).

Belongs to the complex I subunit 3 family.

Its subcellular location is the mitochondrion membrane. It catalyses the reaction a ubiquinone + NADH + 5 H(+)(in) = a ubiquinol + NAD(+) + 4 H(+)(out). Core subunit of the mitochondrial membrane respiratory chain NADH dehydrogenase (Complex I) that is believed to belong to the minimal assembly required for catalysis. Complex I functions in the transfer of electrons from NADH to the respiratory chain. The immediate electron acceptor for the enzyme is believed to be ubiquinone. In Gadus morhua (Atlantic cod), this protein is NADH-ubiquinone oxidoreductase chain 3 (MT-ND3).